We begin with the raw amino-acid sequence, 44 residues long: uncharacterized protein (44 aa).

A helical membrane pass occupies residues 19–39 (AVGFVVSFGFFAFLFVMATVI).

It is found in the cell membrane. This is an uncharacterized protein from Bacillus subtilis (strain 168).